The sequence spans 406 residues: MSQPITRENFDEWMIPVYAPAPFIPVRGEGSRLWDQQGKEYIDFAGGIAVNALGHAHPELREALNEQASKFWHTGNGYTNEPVLRLAKKLIDATFADRVFFCNSGAEANEAALKLARKFAHDRYGSHKSGIVAFKNAFHGRTLFTVSAGGQPAYSQDFAPLPPDIRHAAYNDINSASALIDDSTCAVIVEPIQGEGGVVPASNAFLHGLRELCDRHNALLIFDEVQTGVGRTGELYAYMHYGVTPDLLTTAKALGGGFPVGALLATEECASVMTVGTHGTTYGGNPLASAVAGKVLDLINTPEMLNGVKQRHDWFVERLNTVNHRCGLFSEVRGLGLLIGCVLNADYAGQAKQISQEAAKAGVMVLIAGGNVVRFAPALNVSEEEVTTGLDRFAAACDHFVSRGSS.

N6-(pyridoxal phosphate)lysine is present on Lys-252.

This sequence belongs to the class-III pyridoxal-phosphate-dependent aminotransferase family. AstC subfamily. Requires pyridoxal 5'-phosphate as cofactor.

It catalyses the reaction N(2)-succinyl-L-ornithine + 2-oxoglutarate = N-succinyl-L-glutamate 5-semialdehyde + L-glutamate. It functions in the pathway amino-acid degradation; L-arginine degradation via AST pathway; L-glutamate and succinate from L-arginine: step 3/5. In terms of biological role, catalyzes the transamination of N(2)-succinylornithine and alpha-ketoglutarate into N(2)-succinylglutamate semialdehyde and glutamate. Can also act as an acetylornithine aminotransferase. The chain is Succinylornithine transaminase from Escherichia coli O17:K52:H18 (strain UMN026 / ExPEC).